A 342-amino-acid polypeptide reads, in one-letter code: Cathepsin B-like cysteine proteinase (342 aa).

Positions M1–A17 are cleaved as a signal peptide. A propeptide spans H18–E89 (activation peptide). Disulfide bonds link C103–C132, C115–C159, C151–C217, C152–C155, C188–C221, and C196–C207. C118 is a catalytic residue. Residues H288 and N308 contribute to the active site.

It belongs to the peptidase C1 family. As to expression, intestine (gut).

In terms of biological role, thiol protease. Has a role as a digestive enzyme. This is Cathepsin B-like cysteine proteinase (CATB) from Schistosoma japonicum (Blood fluke).